Reading from the N-terminus, the 379-residue chain is Programmed cell death protein 2-like (379 aa).

The protein is Programmed cell death protein 2-like (PDCD2L) of Gallus gallus (Chicken).